A 92-amino-acid chain; its full sequence is Small ribosomal subunit protein uS17 (92 aa).

This sequence belongs to the universal ribosomal protein uS17 family. Part of the 30S ribosomal subunit.

One of the primary rRNA binding proteins, it binds specifically to the 5'-end of 16S ribosomal RNA. This Cupriavidus pinatubonensis (strain JMP 134 / LMG 1197) (Cupriavidus necator (strain JMP 134)) protein is Small ribosomal subunit protein uS17.